Consider the following 476-residue polypeptide: Undecaprenyl-phosphate galactose phosphotransferase (476 aa).

5 helical membrane-spanning segments follow: residues 15–35, 52–72, 93–113, 115–135, and 283–303; these read IFLA…SLGC, LDTR…WFWI, TIVI…WQFS, YVWV…RALT, and FDIV…IYLW. Topologically, residues 304 to 476 are cytoplasmic; the sequence is YKVTRDGGPA…KVVLRRDGAY (173 aa).

This sequence belongs to the bacterial sugar transferase family.

The protein localises to the cell inner membrane. The enzyme catalyses di-trans,octa-cis-undecaprenyl phosphate + UDP-alpha-D-galactose = alpha-D-galactosyl-di-trans,octa-cis-undecaprenyl diphosphate + UMP. It functions in the pathway bacterial outer membrane biogenesis; LPS O-antigen biosynthesis. Its function is as follows. Is responsible for transferring galactose-1-phosphate to the lipid precursor undecaprenol phosphate in the first steps of O-polysaccharide biosynthesis. This is Undecaprenyl-phosphate galactose phosphotransferase (rfbP) from Salmonella typhimurium (strain LT2 / SGSC1412 / ATCC 700720).